We begin with the raw amino-acid sequence, 326 residues long: MIKLLYPKFWQKQNIIAYLLLPVSLIYQFLGYLRASLAQPIMLPAKVICVGNCSVGGTGKTQIVIYLAKLLKARNVSFVIVTKGYGSKLKNAAIVNARHTVLEVGDEGVILVKYGLVIATKNIKEALPLINELKPDVIIVDDFLQNPHFHKDFTIVSVDSQRLFGNGFLIPAGPLRQYPNKALDAADLVFLVSSTNDKMLNILTPYVNKLINAQIVPLNNIDKTKNYFAFSGIGNPERFFSTLKNYGLNIVGYKIFPDHYNYLQADLENLYSLAKEHNNATLITTRKDYVKFHDLNNNIVCLDVELSINNPNLLNEKIFKKAQIFN.

Position 54 to 61 (54 to 61 (SVGGTGKT)) interacts with ATP.

This sequence belongs to the LpxK family.

The enzyme catalyses a lipid A disaccharide + ATP = a lipid IVA + ADP + H(+). It functions in the pathway glycolipid biosynthesis; lipid IV(A) biosynthesis; lipid IV(A) from (3R)-3-hydroxytetradecanoyl-[acyl-carrier-protein] and UDP-N-acetyl-alpha-D-glucosamine: step 6/6. Transfers the gamma-phosphate of ATP to the 4'-position of a tetraacyldisaccharide 1-phosphate intermediate (termed DS-1-P) to form tetraacyldisaccharide 1,4'-bis-phosphate (lipid IVA). The chain is Tetraacyldisaccharide 4'-kinase from Rickettsia canadensis (strain McKiel).